The following is a 364-amino-acid chain: DNA polymerase IV (364 aa).

The region spanning 14-198 (IIHIDMDAFF…LPVEKFHGVG (185 aa)) is the UmuC domain. Asp18 and Asp116 together coordinate Mg(2+). The active site involves Glu117.

It belongs to the DNA polymerase type-Y family. Monomer. The cofactor is Mg(2+).

It is found in the cytoplasm. It carries out the reaction DNA(n) + a 2'-deoxyribonucleoside 5'-triphosphate = DNA(n+1) + diphosphate. Its function is as follows. Poorly processive, error-prone DNA polymerase involved in untargeted mutagenesis. Copies undamaged DNA at stalled replication forks, which arise in vivo from mismatched or misaligned primer ends. These misaligned primers can be extended by PolIV. Exhibits no 3'-5' exonuclease (proofreading) activity. May be involved in translesional synthesis, in conjunction with the beta clamp from PolIII. The chain is DNA polymerase IV from Lactococcus lactis subsp. cremoris (strain MG1363).